The primary structure comprises 240 residues: Ribonuclease HII (240 aa).

Residues 7–215 (RYAIGIDEAG…LKRIAPGWYV (209 aa)) enclose the RNase H type-2 domain. A divalent metal cation-binding residues include Asp-13, Glu-14, and Asp-112.

This sequence belongs to the RNase HII family. Mn(2+) is required as a cofactor. It depends on Mg(2+) as a cofactor.

The protein localises to the cytoplasm. It carries out the reaction Endonucleolytic cleavage to 5'-phosphomonoester.. Endonuclease that specifically degrades the RNA of RNA-DNA hybrids. In Hyperthermus butylicus (strain DSM 5456 / JCM 9403 / PLM1-5), this protein is Ribonuclease HII.